A 242-amino-acid chain; its full sequence is Small ribosomal subunit protein uS2 (242 aa).

It belongs to the universal ribosomal protein uS2 family.

The chain is Small ribosomal subunit protein uS2 from Shewanella halifaxensis (strain HAW-EB4).